The sequence spans 1020 residues: Contactin-1 (1020 aa).

An N-terminal signal peptide occupies residues 1–20 (MKMPLLVSHLLLISLTSCLG). Ig-like C2-type domains lie at 41-131 (PIFE…ATLS), 137-223 (PFPP…KSVF), 241-326 (PADI…ARIY), 331-407 (PEWV…AELK), 413-500 (PTFE…GTLV), and 504-603 (PTRI…LVVR). Cystine bridges form between Cys65/Cys114 and Cys158/Cys211. 2 N-linked (GlcNAc...) asparagine glycosylation sites follow: Asn208 and Asn258. Cys263 and Cys310 are disulfide-bonded. N-linked (GlcNAc...) asparagine glycosylation is present at Asn338. Disulfide bonds link Cys352–Cys391 and Cys436–Cys484. Residues Asn457, Asn473, Asn494, and Asn521 are each glycosylated (N-linked (GlcNAc...) asparagine). Cys526 and Cys585 form a disulfide bridge. Asn593 is a glycosylation site (N-linked (GlcNAc...) asparagine). 4 consecutive Fibronectin type-III domains span residues 608–706 (PPGG…TDGA), 711–808 (APSD…SAQD), 813–908 (APTE…APPS), and 909–1002 (QPPR…TLSS). Residues 695 to 719 (SIPSNRIKTDGAAPNVAPSDVGGGG) are disordered. Asn935 carries an N-linked (GlcNAc...) asparagine glycan. Residue Ser1001 is the site of GPI-anchor amidated serine attachment. A propeptide spans 1002–1020 (SSLLSLLLPSLGFLVYSEF) (removed in mature form).

Belongs to the immunoglobulin superfamily. Contactin family. In terms of assembly, monomer. Interacts with CNTNAP1 in cis form. Binds to the carbonic-anhydrase like domain of PTPRZ1. Interacts with NOTCH1 and TNR. Detected in a complex with NRCAM and PTPRB. Interacts with TASOR. As to expression, expressed in the ovary and in Sertoli cells of the testis.

Its subcellular location is the cell membrane. Its function is as follows. Contactins mediate cell surface interactions during nervous system development. Involved in the formation of paranodal axo-glial junctions in myelinated peripheral nerves and in the signaling between axons and myelinating glial cells via its association with CNTNAP1. Participates in oligodendrocytes generation by acting as a ligand of NOTCH1. Its association with NOTCH1 promotes NOTCH1 activation through the released notch intracellular domain (NICD) and subsequent translocation to the nucleus. Interaction with TNR induces a repulsion of neurons and an inhibition of neurite outgrowth. This chain is Contactin-1 (Cntn1), found in Mus musculus (Mouse).